The following is a 713-amino-acid chain: Leucine-rich repeat-containing protein 4B (713 aa).

The N-terminal stretch at 1–35 is a signal peptide; it reads MARARGSPCPPLPPGRMSWPHGALLFLWLFSPPLG. The Extracellular segment spans residues 36–576; sequence AGGGGVAVTS…DLDDVMKTTK (541 aa). Residues 48-86 enclose the LRRNT domain; sequence GGGSPPATSCPVACSCSNQASRVICTRRDLAEVPASIPV. 9 LRR repeats span residues 87–108, 111–132, 135–156, 159–180, 183–205, 208–229, 230–251, 254–275, and 278–299; these read NTRY…TFKH, HLEI…AFNG, SLNT…AFEY, KLRE…AFNR, SLRR…AFEG, NLRY…TALV, RLEE…SFQG, SLRK…AFDD, and SLEE…LFTP. Asn224 carries an N-linked (GlcNAc...) asparagine glycan. Asn283, Asn333, Asn374, Asn400, Asn422, Asn425, Asn444, and Asn452 each carry an N-linked (GlcNAc...) asparagine glycan. Residues 311–363 form the LRRCT domain; that stretch reads NPWHCNCDVLWLSWWLKETVPSNTTCCARCHAPAGLKGRYIGELDQSHFTCYA. An Ig-like C2-type domain is found at 364–452; sequence PVIVEPPTDL…GNTTASATLN (89 aa). Cys385 and Cys436 are disulfide-bonded. The segment at 497–551 is disordered; sequence TQPGEEALQPRGTEKEPPGPTTDGVWGGGRPGDAAGPASSSTTAPAPRSSRPTEK. Over residues 528–546 the composition is skewed to low complexity; sequence GDAAGPASSSTTAPAPRSS. Residues 577–597 traverse the membrane as a helical segment; that stretch reads IIIGCFVAITFMAAVMLVAFY. The Cytoplasmic segment spans residues 598 to 713; it reads KLRKQHQLHK…SKENVQETQI (116 aa). The residue at position 693 (Ser693) is a Phosphoserine. Residues 694-713 form a disordered region; sequence IHEPLLFKSGSKENVQETQI. Positions 703-713 are enriched in basic and acidic residues; the sequence is GSKENVQETQI.

As to quaternary structure, interacts with PTPRF. Interacts with DLG4. In terms of processing, N-glycosylated. O-glycosylated; contains sialic acid.

Its subcellular location is the membrane. It is found in the presynaptic cell membrane. Its function is as follows. Synaptic adhesion protein. Regulates the formation of excitatory synapses. The trans-synaptic adhesion between LRRC4B and PTPRF regulates the formation of excitatory synapses in a bidirectional manner. This is Leucine-rich repeat-containing protein 4B (LRRC4B) from Homo sapiens (Human).